The primary structure comprises 2259 residues: MFKKLKQKISEEQQQLQQALAPAQASSSSSTPTRTRSRTSSFTDQLDDATPNRELLAGMVAEPAFLSEYTIFALDPSKQPKTQTGSVSGDTQTFAQKLQLRVPSMESLFRSPIKESLFRSSKESLVRTSSRESLNQVDLDCAVATFDPPSDMESEAEDAPWSSDSLSREQLLQRLRRMERSLSSYRGKYSELVTAFQTLQREKKKLQGILSQSQDKSLRRISELREELQMDQQAKRHLQEEFDACVEEKDQYISVLQTQVSLLKQRLQNGPMSVDVPKPLPPVELQAEAHSDMEKLEEKLEEKLEEKLEEKLEGVGEAVGGGTSAKTLEMLQQRVKRQENLLQRCKETIGSHKEQCALLLSEKEALQEQLEERLQELEKMKELHMAEKTKLITQLRDAKNLIEQLEQDKGMVITEAKRQMLETLELKDDEIAQLRSHIQRMTTQGEELREQKEKSERAAFEELEKALSTAQKTEDAQRRMKVEMDEQIKAVERAGEEERLRLQHELSRVRQEAVSMAKKNSEQRADLQKLHAEQLASKEQELSQKLESRERELQEQMRMALEKSRSEYLKLTQEKEQQESLALEELELQKKAILTESENKLQGLRQEAEVHRTRIRELETSLEKSLQESRTQSERLAVHLEAEKSKHKTELTALAEKHRTELEGLQQQQHSLWTERLQNLSQQHQAAVEELREKHQQEKDALLKEKESLFQAHIQDMNEKTLEKLDKKQMELESVSSELSEALKARDQLAEELSVLRGDADQMKQALEAELQEQRRHHQREVDSISGQQEIIVRRTEKALKDEISQLGGLLKEKDEHLQERQAQVHNLEACLQKSAEELQQALAKLDLLQAQQSTTHAQTGAYEEQLAQMQQKVSDLETEKNLLTKQVVEVETQKKRVCVELDAQRAQVQQLERQRSELEDKVKSLAQLQESQLKNSHVEKEQAQQILTEKENVILQMREEQAKEIEILKQKLFSKEESISILHEEYETKFKNQEKRMEKIKQKAKEMQEMKKKLLDQEAKLKKELENTVLELSQKEKQFNAKILEMAQANSAGISDTVSRLEENQRQQIESLTGAHQRELDDLIESWEKKLSQQAEELRDQHEKLIEEKEQELGELKQKVLTVQSEKEEVTQEVARLTEAVTGQDVTLAGLQGQLEQKSAAVLALSDSHAQLQSQVEKLEVDLGCALNEKLSLQEELAELKMLAEREKLRVSELTGKVQAAEEELQSCKSLHEVSRKSLEDKSLNLRTLLEELASQLDRHCERTKALLEAKTNELVCTSRDKADAILARLSRCQRHTATVGEALLRRMGQVSELEAQLTQLTEEQCTLKNSFQQVTNQLEEKENQIKTMKADMEGLIAEKEALQQEGGQQQQVASEKESCITQLKKELSENINAVTLLREELSEKKSEIASLSKQLSDVSAQLENSISPSDKAEAISALSKQHEEQELQLQAQLRELSSKVDALSKEKMSALEQVDHWSNKFSEWKKKAQPRFAQYQSTIKDLQTQLDLKAKEAGEKDEQIRLLKEDLDQQNERFESLKGEMEKKECDLETELKTRTARVVELEDCITQRKKEVESLNEALRNCSQQRDTEHSGLVQTLQRLEELGQEKDNKVREAEETVLGLRERVSSLEAELRVVRKELDDVNSSVKSRDGELKALEDKLELESAAKVELKRKAEQKLAAIRKQLLSQMEAKVQQCAKDTESQLSELRAKLQGREKQIHILEGKLKNLASSPHPERAVVSGSMGNVAASPEQEAADSQECTQKACKERVCVLQRSVIEKERLTQRLQQGEREAAPSQSEVRHRELSVKLDRARAKQLEDQVLIGCLQEELEERMKCPSILSQPMGEETGKNNTGLKQNWASMVDTVQKTLQEKELSCQALERRVRELESDLITERDAHRLEVEKLTLKYEKSQSPQQEMGGKNTSVEILEDRPEENSKSHVIESKLGTPMDGRHSDLESKLAGSEREKQKLSKEVGRLQKDLRALRKEHQQELDILRKECEQEAEEKLKQEQEDLELKHSSTLKQLMREFNTQLAQKEQELERTVQETIDKAQEVEAELLQSHQEETQQLHRKIAEKEDDLQRTARRYEEILDAREEEMTAKVMDLQTRLEELQKKYEHRLEQEESAKDSVTVLELQTQLAQKTTLISDSKLKEQELREQVHNLEDRLKSYEKSVCAAAVGAPYRGGNLYHTEVSLFGEPTEFEYLRKVLFEYMMGRETKTMAKVITTVLRFPDDQAQKILEREDARLMSWLRTSS.

Positions 1–54 (MFKKLKQKISEEQQQLQQALAPAQASSSSSTPTRTRSRTSSFTDQLDDATPNRE) are disordered. S10 bears the Phosphoserine mark. Residues 12–41 (EQQQLQQALAPAQASSSSSTPTRTRSRTSS) are compositionally biased toward low complexity. T39 bears the Phosphothreonine mark. Residues S41, S104, and S111 each carry the phosphoserine modification. An interaction with MACF1 region spans residues 165-235 (SLSREQLLQR…EELQMDQQAK (71 aa)). Residues 167–2182 (SREQLLQRLR…SYEKSVCAAA (2016 aa)) adopt a coiled-coil conformation. Basic and acidic residues-rich tracts occupy residues 1932–1946 (LEDRPEENSKSHVIE) and 1954–1977 (DGRHSDLESKLAGSEREKQKLSKE). A disordered region spans residues 1932 to 1977 (LEDRPEENSKSHVIESKLGTPMDGRHSDLESKLAGSEREKQKLSKE). The region spanning 2199 to 2246 (LFGEPTEFEYLRKVLFEYMMGRETKTMAKVITTVLRFPDDQAQKILER) is the GRIP domain.

As to quaternary structure, homodimer. Interacts with GTP-bound ARL1 and ARL3. Interacts with MACF1. Directly interacts with TBC1D23. Interacts with FAM91A1; this interaction may be mediated by TBC1D23. Expressed in the head of epididymal sperm but not in testicular sperm (at protein level).

It localises to the cytoplasm. It is found in the golgi apparatus membrane. Its subcellular location is the golgi apparatus. The protein localises to the trans-Golgi network membrane. Involved in vesicular trafficking at the Golgi apparatus level. May play a role in delivery of transport vesicles containing GPI-linked proteins from the trans-Golgi network through its interaction with MACF1. Involved in endosome-to-Golgi trafficking. This chain is Golgin subfamily A member 4, found in Rattus norvegicus (Rat).